A 286-amino-acid chain; its full sequence is Probable protein VP2 (286 aa).

Disordered stretches follow at residues 67–108 and 184–286; these read LPAA…GPED and QAAR…GGGI. Positions 222–241 are enriched in basic residues; it reads GKTRSRRKAGRKAQRKRRRP. Residues 242–265 show a composition bias toward low complexity; that stretch reads SPSSSSSSCSNSESWESNSDSCST.

In terms of processing, phosphorylated at C-terminal serines.

The polypeptide is Probable protein VP2 (Homo sapiens (Human)).